A 1135-amino-acid chain; its full sequence is APC membrane recruitment protein 1 (1135 aa).

Met-1 is modified (N-acetylmethionine). 7 disordered regions span residues 1 to 115, 156 to 308, 339 to 405, 447 to 484, 736 to 764, 921 to 948, and 1007 to 1135; these read METQ…EGTG, AEKF…VGDP, SMTD…EDDD, GLAP…DDSG, NFGG…KEGN, LQAQ…PLSL, and VPES…NLAK. Low complexity predominate over residues 10 to 19; sequence QAKGAAASGS. Positions 23 to 35 are enriched in basic and acidic residues; the sequence is QTAEKGAKNKAAE. Residues 36-50 show a composition bias toward low complexity; that stretch reads ATEGPTSEPSSSGPG. Over residues 73–83 the composition is skewed to gly residues; that stretch reads FGGGRSKGSGK. Composition is skewed to basic and acidic residues over residues 94-107 and 196-208; these read KTHD…HGPE and GPER…HEHV. Pro residues predominate over residues 238 to 248; that stretch reads KVSPTPEPSPP. Phosphoserine is present on Ser-246. 2 stretches are compositionally biased toward basic and acidic residues: residues 253–262 and 282–291; these read MACKDPEKPM and EEPHSPETGE. The segment covering 373-405 has biased composition (acidic residues); sequence ALPDDDDEEEEEEEEVELEEEEEEVKEEEEDDD. Residues 455–466 show a composition bias toward polar residues; the sequence is TPQSDQQESAPN. Acidic residues predominate over residues 926-938; sequence EDSDEEDEEEEEG. A compositionally biased stretch (low complexity) spans 1058–1069; the sequence is PSCSSSSGGFSP. Over residues 1119 to 1135 the composition is skewed to polar residues; the sequence is SLATSYSSTAMNGNLAK.

Belongs to the Amer family. As to quaternary structure, interacts with CTNNB1, AXIN1, LRP6, KEAP1, APC and BTRC. Interacts with SCF (SKP1-CUL1-F-box protein) E3 ubiquitin-protein ligase complexes containing BTRC and/or FBXW11. Identified in the beta-catenin destruction complex containing CTNNB1, APC, AXIN1 and AXIN2. Interacts with WT1. In terms of tissue distribution, detected in fetal and adult kidney, brain and spleen.

The protein localises to the cytoplasm. The protein resides in the cell membrane. It localises to the nucleus. Regulator of the canonical Wnt signaling pathway. Acts by specifically binding phosphatidylinositol 4,5-bisphosphate (PtdIns(4,5)P2), translocating to the cell membrane and interacting with key regulators of the canonical Wnt signaling pathway, such as components of the beta-catenin destruction complex. Acts both as a positive and negative regulator of the Wnt signaling pathway, depending on the context: acts as a positive regulator by promoting LRP6 phosphorylation. Also acts as a negative regulator by acting as a scaffold protein for the beta-catenin destruction complex and promoting stabilization of Axin at the cell membrane. Promotes CTNNB1 ubiquitination and degradation. Involved in kidney development. This chain is APC membrane recruitment protein 1 (AMER1), found in Homo sapiens (Human).